Here is a 157-residue protein sequence, read N- to C-terminus: MAKKSHQENNDNLIAQNKKARHDYFVTDTVEAGLVLTGTEIKSVRAHRVNLKDGFAQVRNGEAWLMNVHISEYDNGTYFNQDPLRNRKLLLHKKEINKLVGALQDKGVTLIPLKMYIKHGYAKVLLGLAKGKHQYDKREAIKRREQNREIERVMKHY.

The protein belongs to the SmpB family.

The protein localises to the cytoplasm. Functionally, required for rescue of stalled ribosomes mediated by trans-translation. Binds to transfer-messenger RNA (tmRNA), required for stable association of tmRNA with ribosomes. tmRNA and SmpB together mimic tRNA shape, replacing the anticodon stem-loop with SmpB. tmRNA is encoded by the ssrA gene; the 2 termini fold to resemble tRNA(Ala) and it encodes a 'tag peptide', a short internal open reading frame. During trans-translation Ala-aminoacylated tmRNA acts like a tRNA, entering the A-site of stalled ribosomes, displacing the stalled mRNA. The ribosome then switches to translate the ORF on the tmRNA; the nascent peptide is terminated with the 'tag peptide' encoded by the tmRNA and targeted for degradation. The ribosome is freed to recommence translation, which seems to be the essential function of trans-translation. This is SsrA-binding protein from Limosilactobacillus reuteri (strain DSM 20016) (Lactobacillus reuteri).